A 761-amino-acid chain; its full sequence is Putative pentatricopeptide repeat-containing protein At2g02150 (761 aa).

PPR repeat units lie at residues 141-175, 191-225, 226-260, 261-295, 296-330, 331-365, 366-400, 401-435, 436-470, 471-505, 506-540, 541-575, 576-606, 612-646, 647-681, 682-716, and 717-751; these read SVESYCIVAHILFCARMYYDANSVLKEMVLSKADC, GFGVFDALFSVLIDLGMLEEAIQCFSKMKRFRVFP, KTRSCNGLLHRFAKLGKTDDVKRFFKDMIGAGARP, TVFTYNIMIDCMCKEGDVEAARGLFEEMKFRGLVP, DTVTYNSMIDGFGKVGRLDDTVCFFEEMKDMCCEP, DVITYNALINCFCKFGKLPIGLEFYREMKGNGLKP, NVVSYSTLVDAFCKEGMMQQAIKFYVDMRRVGLVP, NEYTYTSLIDANCKIGNLSDAFRLGNEMLQVGVEW, NVVTYTALIDGLCDAERMKEAEELFGKMDTAGVIP, NLASYNALIHGFVKAKNMDRALELLNELKGRGIKP, DLLLYGTFIWGLCSLEKIEAAKVVMNEMKECGIKA, NSLIYTTLMDAYFKSGNPTEGLHLLDEMKELDIEV, TVVTFCVLIDGLCKNKLVSKAVDYFNRISND, NAAIFTAMIDGLCKDNQVEAATTLFEQMVQKGLVP, DRTAYTSLMDGNFKQGNVLEALALRDKMAEIGMKL, DLLAYTSLVWGLSHCNQLQKARSFLEEMIGEGIHP, and DEVLCISVLKKHYELGCIDEAVELQSYLMKHQLLT.

The protein belongs to the PPR family. P subfamily.

This is Putative pentatricopeptide repeat-containing protein At2g02150 from Arabidopsis thaliana (Mouse-ear cress).